Reading from the N-terminus, the 418-residue chain is Glutamyl-tRNA reductase (418 aa).

Substrate is bound by residues 49 to 52 (TCNR), serine 109, 114 to 116 (EPQ), and glutamine 120. Cysteine 50 acts as the Nucleophile in catalysis. 189 to 194 (GAGETI) contributes to the NADP(+) binding site.

Belongs to the glutamyl-tRNA reductase family. In terms of assembly, homodimer.

The catalysed reaction is (S)-4-amino-5-oxopentanoate + tRNA(Glu) + NADP(+) = L-glutamyl-tRNA(Glu) + NADPH + H(+). The protein operates within porphyrin-containing compound metabolism; protoporphyrin-IX biosynthesis; 5-aminolevulinate from L-glutamyl-tRNA(Glu): step 1/2. Functionally, catalyzes the NADPH-dependent reduction of glutamyl-tRNA(Glu) to glutamate 1-semialdehyde (GSA). This chain is Glutamyl-tRNA reductase, found in Klebsiella pneumoniae subsp. pneumoniae (strain ATCC 700721 / MGH 78578).